We begin with the raw amino-acid sequence, 333 residues long: Glycerol-3-phosphate dehydrogenase [NAD(P)+] (333 aa).

Residues Ser-10, Trp-11, and Lys-105 each coordinate NADPH. Sn-glycerol 3-phosphate-binding residues include Lys-105, Gly-136, and Thr-138. Position 140 (Ala-140) interacts with NADPH. Sn-glycerol 3-phosphate-binding residues include Lys-191, Asp-244, Ser-254, Arg-255, and Asn-256. Lys-191 serves as the catalytic Proton acceptor. Arg-255 serves as a coordination point for NADPH. Residues Val-279 and Glu-281 each coordinate NADPH.

Belongs to the NAD-dependent glycerol-3-phosphate dehydrogenase family.

The protein resides in the cytoplasm. The enzyme catalyses sn-glycerol 3-phosphate + NAD(+) = dihydroxyacetone phosphate + NADH + H(+). It catalyses the reaction sn-glycerol 3-phosphate + NADP(+) = dihydroxyacetone phosphate + NADPH + H(+). The protein operates within membrane lipid metabolism; glycerophospholipid metabolism. Functionally, catalyzes the reduction of the glycolytic intermediate dihydroxyacetone phosphate (DHAP) to sn-glycerol 3-phosphate (G3P), the key precursor for phospholipid synthesis. The chain is Glycerol-3-phosphate dehydrogenase [NAD(P)+] from Syntrophotalea carbinolica (strain DSM 2380 / NBRC 103641 / GraBd1) (Pelobacter carbinolicus).